A 190-amino-acid chain; its full sequence is Peptidyl-tRNA hydrolase (190 aa).

Residue Tyr14 participates in tRNA binding. His19 functions as the Proton acceptor in the catalytic mechanism. TRNA-binding residues include Tyr64, Asn66, and Asn112.

The protein belongs to the PTH family. As to quaternary structure, monomer.

Its subcellular location is the cytoplasm. The enzyme catalyses an N-acyl-L-alpha-aminoacyl-tRNA + H2O = an N-acyl-L-amino acid + a tRNA + H(+). Hydrolyzes ribosome-free peptidyl-tRNAs (with 1 or more amino acids incorporated), which drop off the ribosome during protein synthesis, or as a result of ribosome stalling. Functionally, catalyzes the release of premature peptidyl moieties from peptidyl-tRNA molecules trapped in stalled 50S ribosomal subunits, and thus maintains levels of free tRNAs and 50S ribosomes. In Chlorobium luteolum (strain DSM 273 / BCRC 81028 / 2530) (Pelodictyon luteolum), this protein is Peptidyl-tRNA hydrolase.